The primary structure comprises 203 residues: Small ribosomal subunit protein uS4c (203 aa).

Residues 91–154 (MRLDNIIFRL…KYESIISKNI (64 aa)) enclose the S4 RNA-binding domain.

The protein belongs to the universal ribosomal protein uS4 family. As to quaternary structure, part of the 30S ribosomal subunit. Contacts protein S5. The interaction surface between S4 and S5 is involved in control of translational fidelity.

It localises to the plastid. The protein localises to the chloroplast. One of the primary rRNA binding proteins, it binds directly to 16S rRNA where it nucleates assembly of the body of the 30S subunit. In terms of biological role, with S5 and S12 plays an important role in translational accuracy. The protein is Small ribosomal subunit protein uS4c (rps4) of Lopidium struthiopteris (Moss).